Here is a 135-residue protein sequence, read N- to C-terminus: MAHRIVTQVVVTGARVFGRAFAEAYKQASAASKYQQKTGKSAGGSSSSGITLDEACKILNVKPPQAGETNLEQVMERFKKLFDLNDPQKGGSFYLQSKILRARERIEAEVREAERKAAHEKELKEGWKPKVYKDR.

A disordered region spans residues 30 to 49 (AASKYQQKTGKSAGGSSSSG). The segment covering 39–49 (GKSAGGSSSSG) has biased composition (low complexity). A J-like region spans residues 54–111 (EACKILNVKPPQAGETNLEQVMERFKKLFDLNDPQKGGSFYLQSKILRARERIEAEVR). Residues 114 to 135 (ERKAAHEKELKEGWKPKVYKDR) are disordered.

Belongs to the TIM16/PAM16 family. In terms of assembly, heterodimer with PAM18/pamR. Component of the PAM complex, at least composed of mtHsp70, MGE1/mgeA, tim44, PAM16/pamP, PAM17/pamQ and PAM18/pamR.

Its subcellular location is the mitochondrion inner membrane. Functionally, essential component of the PAM complex, a complex required for the translocation of transit peptide-containing proteins from the inner membrane into the mitochondrial matrix in an ATP-dependent manner. In the complex, it is required to regulate activity of mtHSP70 (SSC1/sscA) via its interaction with PAM18/TIM14. May act by positioning PAM18/pamR in juxtaposition to mtHSP70 at the translocon to maximize ATPase stimulation. In Emericella nidulans (strain FGSC A4 / ATCC 38163 / CBS 112.46 / NRRL 194 / M139) (Aspergillus nidulans), this protein is Mitochondrial import inner membrane translocase subunit tim16 (pam16).